A 224-amino-acid chain; its full sequence is Peroxiredoxin-6 (224 aa).

A Thioredoxin domain is found at 5–169 (LLLGDEAPNF…ILRVVDSLQL (165 aa)). Positions 31-40 (DSWGILFSHP) are required and sufficient for targeting to lysosomes and lamellar bodies. Thr44 carries the post-translational modification Phosphothreonine. Cys47 serves as the catalytic Cysteine sulfenic acid (-SOH) intermediate; for peroxidase activity. Lys63 is subject to N6-acetyllysine. Tyr89 is modified (phosphotyrosine). Thr93 is subject to Phosphothreonine. The active-site For phospholipase activity is Asp140. At Thr177 the chain carries Phosphothreonine; by MAPK. Lys209 carries the post-translational modification N6-acetyllysine; alternate. Lys209 is subject to N6-succinyllysine; alternate.

It belongs to the peroxiredoxin family. Prx6 subfamily. In terms of assembly, homodimer. Interacts with GSTP1; mediates PRDX6 glutathionylation and regeneration. Interacts with APEX1. Interacts with STH. May interact with FAM168B. May interact with HTR2A. Irreversibly inactivated by overoxidation of Cys-47 to sulfinic acid (Cys-SO(2)H) and sulfonic acid (Cys-SO(3)H) forms upon oxidative stress. In terms of processing, phosphorylation at Thr-177 by MAP kinases increases the phospholipase activity of the enzyme. The phosphorylated form exhibits a greater lysophosphatidylcholine acyltransferase activity compared to the non-phosphorylated form. As to expression, highly expressed in heart, kidney and liver. Moderate expression in brain and stomach. Very low levels in intestine.

The protein localises to the cytoplasm. It is found in the lysosome. It catalyses the reaction a hydroperoxide + 2 glutathione = an alcohol + glutathione disulfide + H2O. It carries out the reaction a 1,2-diacyl-sn-glycero-3-phosphocholine + H2O = a 1-acyl-sn-glycero-3-phosphocholine + a fatty acid + H(+). The catalysed reaction is a 1-acyl-sn-glycero-3-phosphocholine + an acyl-CoA = a 1,2-diacyl-sn-glycero-3-phosphocholine + CoA. The enzyme catalyses 1-hexadecanoyl-sn-glycero-3-phosphocholine + hexadecanoyl-CoA = 1,2-dihexadecanoyl-sn-glycero-3-phosphocholine + CoA. It catalyses the reaction 1,2-dihexadecanoyl-sn-glycero-3-phosphocholine + H2O = 1-hexadecanoyl-sn-glycero-3-phosphocholine + hexadecanoate + H(+). With respect to regulation, MJ33 or lithium;[(2R)-1-hexadecoxy-3-(2,2,2-trifluoroethoxy)propan-2-yl] methyl phosphate inhibits its phospholipase A2 activity. CI-976 or 2,2-Dimethyl-N-(2,4,6-trimethoxyphenyl)dodecanamide inhibits its lysophosphatidylcholine acyltransferase activity. In terms of biological role, thiol-specific peroxidase that catalyzes the reduction of hydrogen peroxide and organic hydroperoxides to water and alcohols, respectively. Can reduce H(2)O(2) and short chain organic, fatty acid, and phospholipid hydroperoxides. Has phospholipase activity. Can either reduce the oxidized sn-2 fatty acyl group of phospholipids (peroxidase activity) or hydrolyze the sn-2 ester bond of phospholipids (phospholipase activity). These activities are dependent on binding to phospholipids at acidic pH and to oxidized phospholipds at cytosolic pH. Plays a role in cell protection against oxidative stress by detoxifying peroxides and in phospholipid homeostasis. Exhibits acyl-CoA-dependent lysophospholipid acyltransferase which mediates the conversion of lysophosphatidylcholine (1-acyl-sn-glycero-3-phosphocholine or LPC) into phosphatidylcholine (1,2-diacyl-sn-glycero-3-phosphocholine or PC). Shows a clear preference for LPC as the lysophospholipid and for palmitoyl CoA as the fatty acyl substrate. In Mus musculus (Mouse), this protein is Peroxiredoxin-6 (Prdx6).